A 273-amino-acid polypeptide reads, in one-letter code: 2-dehydro-3-deoxyphosphooctonate aldolase (273 aa).

This sequence belongs to the KdsA family.

The protein resides in the cytoplasm. The catalysed reaction is D-arabinose 5-phosphate + phosphoenolpyruvate + H2O = 3-deoxy-alpha-D-manno-2-octulosonate-8-phosphate + phosphate. It functions in the pathway carbohydrate biosynthesis; 3-deoxy-D-manno-octulosonate biosynthesis; 3-deoxy-D-manno-octulosonate from D-ribulose 5-phosphate: step 2/3. The protein operates within bacterial outer membrane biogenesis; lipopolysaccharide biosynthesis. This Nitratidesulfovibrio vulgaris (strain DP4) (Desulfovibrio vulgaris) protein is 2-dehydro-3-deoxyphosphooctonate aldolase.